The chain runs to 320 residues: Cytochrome f (320 aa).

Residues 1 to 35 (MQNRKTFSWVKEQMTRSIYVSIMIYVITRASISNA) form the signal peptide. Heme-binding residues include Y36, C56, C59, and H60. The chain crosses the membrane as a helical span at residues 286–306 (VQGLLFFLASVILAQIFLVLK).

Belongs to the cytochrome f family. As to quaternary structure, the 4 large subunits of the cytochrome b6-f complex are cytochrome b6, subunit IV (17 kDa polypeptide, petD), cytochrome f and the Rieske protein, while the 4 small subunits are PetG, PetL, PetM and PetN. The complex functions as a dimer. Heme serves as cofactor.

It localises to the plastid. The protein resides in the chloroplast thylakoid membrane. Functionally, component of the cytochrome b6-f complex, which mediates electron transfer between photosystem II (PSII) and photosystem I (PSI), cyclic electron flow around PSI, and state transitions. This Phalaenopsis aphrodite subsp. formosana (Moth orchid) protein is Cytochrome f.